The sequence spans 272 residues: NH(3)-dependent NAD(+) synthetase (272 aa).

Deamido-NAD(+) is bound at residue Tyr-33. ATP contacts are provided by residues 45–52, Arg-79, and Gln-85; that span reads GISGGQDS. A Mg(2+)-binding site is contributed by Asp-51. Deamido-NAD(+) is bound at residue Arg-138. Thr-158 contributes to the ATP binding site. Glu-163 is a Mg(2+) binding site. Lys-171 and Asp-178 together coordinate deamido-NAD(+). Residues Lys-187 and Thr-209 each contribute to the ATP site. Deamido-NAD(+) contacts are provided by residues Glu-224 and 258–259; that span reads HK.

Belongs to the NAD synthetase family. Homodimer. Post-translationally, phosphorylated during sporulation.

It carries out the reaction deamido-NAD(+) + NH4(+) + ATP = AMP + diphosphate + NAD(+) + H(+). It participates in cofactor biosynthesis; NAD(+) biosynthesis; NAD(+) from deamido-NAD(+) (ammonia route): step 1/1. Catalyzes the ATP-dependent amidation of deamido-NAD to form NAD. Uses ammonia as a nitrogen source. The sequence is that of NH(3)-dependent NAD(+) synthetase from Bacillus subtilis (strain 168).